Here is a 667-residue protein sequence, read N- to C-terminus: MGSTPFCYSINPSPSKLDFTRTHVFSPVSKQFYLDLSSFSGKPGGVSGFRSRRALLGVKAATALVEKEEKREAVTEKKKKSRVLVAGGGIGGLVFALAAKKKGFDVLVFEKDLSAIRGEGKYRGPIQIQSNALAALEAIDIEVAEQVMEAGCITGDRINGLVDGISGTWYVKFDTFTPAASRGLPVTRVISRMTLQQILARAVGEDVIRNESNVVDFEDSGDKVTVVLENGQRYEGDLLVGADGIWSKVRNNLFGRSEATYSGYTCYTGIADFIPADIESVGYRVFLGHKQYFVSSDVGGGKMQWYAFHEEPAGGADAPNGMKKRLFEIFDGWCDNVLDLLHATEEEAILRRDIYDRSPGFTWGKGRVTLLGDSIHAMQPNMGQGGCMAIEDSFQLALELDEAWKQSVETTTPVDVVSSLKRYEESRRLRVAIIHAMARMAAIMASTYKAYLGVGLGPLSFLTKFRVPHPGRVGGRFFVDIAMPSMLDWVLGGNSEKLQGRPPSCRLTDKADDRLREWFEDDDALERTIKGEWYLIPHGDDCCVSETLCLTKDEDQPCIVGSEPDQDFPGMRIVIPSSQVSKMHARVIYKDGAFFLMDLRSEHGTYVTDNEGRRYRATPNFPARFRSSDIIEFGSDKKAAFRVKVIRKTPKSTRKNESNNDKLLQTA.

Residues Met-1–Lys-59 constitute a chloroplast transit peptide. Residues Arg-82–Glu-110 and Gly-360–Asp-373 each bind FAD. The FHA domain maps to Cys-558–Gly-612.

FAD is required as a cofactor. As to expression, expressed in leaves, stems and flowers, and at lower levels in roots and siliques.

The protein resides in the plastid. It localises to the chloroplast. The catalysed reaction is all-trans-zeaxanthin + 4 reduced [2Fe-2S]-[ferredoxin] + 2 O2 + 4 H(+) = all-trans-violaxanthin + 4 oxidized [2Fe-2S]-[ferredoxin] + 2 H2O. It functions in the pathway plant hormone biosynthesis; abscisate biosynthesis. Zeaxanthin epoxidase that plays an important role in the xanthophyll cycle and abscisic acid (ABA) biosynthesis. Converts zeaxanthin into antheraxanthin and subsequently violaxanthin. Required for resistance to osmotic and drought stresses, ABA-dependent stomatal closure, seed development and dormancy, modulation of defense gene expression and disease resistance and non-photochemical quencing (NPQ). Through its role in ABA biosynthesis, regulates the expression of stress-responsive genes such as RD29A during osmotic stress and is required for normal plant growth during vegetative development. Is required for late skotomorphogenic growth through its role in the xanthophyll carotenoids neoxanthin, violaxanthin and antheraxanthin biosynthesis. Required for beta-aminobutyric acid (BABA)-induced priming in disease resistance, tolerance to salt and drought stresses and sterility. Participates in NPQ by regulating the level of zeaxanthin in photosynthetic energy conversion. NPQ is a process that maintains the balance between dissipation and utilization of light energy to minimize the generation of oxidizing molecules and the molecular damages they can generate. This chain is Zeaxanthin epoxidase, chloroplastic (ZEP), found in Arabidopsis thaliana (Mouse-ear cress).